Reading from the N-terminus, the 594-residue chain is DNA ligase (594 aa).

Position 256 (E256) interacts with ATP. The active-site N6-AMP-lysine intermediate is K258. ATP contacts are provided by R263, R279, E309, F349, R426, and K432.

The protein belongs to the ATP-dependent DNA ligase family. Requires Mg(2+) as cofactor.

It catalyses the reaction ATP + (deoxyribonucleotide)n-3'-hydroxyl + 5'-phospho-(deoxyribonucleotide)m = (deoxyribonucleotide)n+m + AMP + diphosphate.. Functionally, DNA ligase that seals nicks in double-stranded DNA during DNA replication, DNA recombination and DNA repair. The polypeptide is DNA ligase (Ignicoccus hospitalis (strain KIN4/I / DSM 18386 / JCM 14125)).